Consider the following 342-residue polypeptide: Foldase protein PrsA (342 aa).

The signal sequence occupies residues 1 to 22 (MVSVKKIVASALVGVLMFSAVG). Cysteine 23 carries N-palmitoyl cysteine lipidation. Cysteine 23 carries the S-diacylglycerol cysteine lipid modification. Residues 189-284 (DSGVLTKHLL…FGYHIIQAGA (96 aa)) form the PpiC domain.

Belongs to the PrsA family.

The protein localises to the cell membrane. The catalysed reaction is [protein]-peptidylproline (omega=180) = [protein]-peptidylproline (omega=0). Functionally, plays a major role in protein secretion by helping the post-translocational extracellular folding of several secreted proteins. The protein is Foldase protein PrsA of Clostridium perfringens (strain 13 / Type A).